Reading from the N-terminus, the 66-residue chain is MAKKNASLLVKLVSSATKITSTGEEKSTGYFYVKKRNPKKLTRKLEFRKYDPVVRRHVLFKEEKLK.

This sequence belongs to the bacterial ribosomal protein bL33 family.

The chain is Large ribosomal subunit protein bL33 from Wolbachia sp. subsp. Brugia malayi (strain TRS).